The sequence spans 405 residues: Secreted aspartic protease FUS4 (405 aa).

A signal peptide spans 1–24 (MLAIATLHVALQVFGAFSLSHAAA). The Peptidase A1 domain occupies 49 to 400 (YLFNVTVGSP…NFEERSFGLA (352 aa)). N-linked (GlcNAc...) asparagine glycosylation is found at Asn-52, Asn-61, Asn-107, and Asn-123. Cys-318 and Cys-356 form a disulfide bridge.

The protein belongs to the peptidase A1 family.

The protein localises to the secreted. Secreted aspartic protease; part of the gene cluster that mediates the biosynthesis of the mycotoxin fusarin C. Within the cluster, FUS1, FUS2, FUS8 and FUS9 are sufficient for fusarin production. The other FUS cluster members are not essential for fusarin C biosynthesis. This Gibberella fujikuroi (strain CBS 195.34 / IMI 58289 / NRRL A-6831) (Bakanae and foot rot disease fungus) protein is Secreted aspartic protease FUS4.